The following is a 527-amino-acid chain: Glutamate--cysteine ligase (527 aa).

It belongs to the glutamate--cysteine ligase type 1 family. Type 1 subfamily.

The catalysed reaction is L-cysteine + L-glutamate + ATP = gamma-L-glutamyl-L-cysteine + ADP + phosphate + H(+). It functions in the pathway sulfur metabolism; glutathione biosynthesis; glutathione from L-cysteine and L-glutamate: step 1/2. This is Glutamate--cysteine ligase from Pseudomonas paraeruginosa (strain DSM 24068 / PA7) (Pseudomonas aeruginosa (strain PA7)).